The sequence spans 339 residues: MSITVNQIVLHQLVKQAAEDGNVQLNTVLRNDLLQISAEVEQLMLELHQAYQGKAKGYGVFKEESLFARQLNRLLEQETDFLPFSYEAAKLLATELGKYTFAESGTLVLCQYNFLATDYLFIALLDSRISMLVDENLEIQRTQYLNINQFDIAARINLTDLRLNAQSNRYLTFIKGRVGRKVGDFFMDFLGADEGLNPQVQNQCLLQAVSDYCEQGELNKAQTQAVKKQVFDYCKGQINSGDEIALAELSEELPTLNERSFAAFAHERDYGLEESIPPLRSTLKSLTKFSGSGKGVTISFDAELINQRIIWDEAADSLTIHGLPANLRDQLRRNLTHEN.

It belongs to the YejK family.

Its subcellular location is the cytoplasm. It localises to the nucleoid. The protein is Nucleoid-associated protein Asuc_0779 of Actinobacillus succinogenes (strain ATCC 55618 / DSM 22257 / CCUG 43843 / 130Z).